A 263-amino-acid polypeptide reads, in one-letter code: Dermonecrotic toxin SpaSicTox-betaIF1 (263 aa).

Mg(2+) is bound by residues Glu-15 and Asp-17. The active-site Nucleophile is the His-31. 2 cysteine pairs are disulfide-bonded: Cys-35/Cys-41 and Cys-37/Cys-179. Residue Asp-75 coordinates Mg(2+).

This sequence belongs to the arthropod phospholipase D family. Class II subfamily. The cofactor is Mg(2+). In terms of tissue distribution, expressed by the venom gland.

Its subcellular location is the secreted. It carries out the reaction an N-(acyl)-sphingosylphosphocholine = an N-(acyl)-sphingosyl-1,3-cyclic phosphate + choline. The enzyme catalyses an N-(acyl)-sphingosylphosphoethanolamine = an N-(acyl)-sphingosyl-1,3-cyclic phosphate + ethanolamine. The catalysed reaction is a 1-acyl-sn-glycero-3-phosphocholine = a 1-acyl-sn-glycero-2,3-cyclic phosphate + choline. It catalyses the reaction a 1-acyl-sn-glycero-3-phosphoethanolamine = a 1-acyl-sn-glycero-2,3-cyclic phosphate + ethanolamine. Its function is as follows. Dermonecrotic toxins cleave the phosphodiester linkage between the phosphate and headgroup of certain phospholipids (sphingolipid and lysolipid substrates), forming an alcohol (often choline) and a cyclic phosphate. This toxin acts on sphingomyelin (SM). It may also act on ceramide phosphoethanolamine (CPE), lysophosphatidylcholine (LPC) and lysophosphatidylethanolamine (LPE), but not on lysophosphatidylserine (LPS), and lysophosphatidylglycerol (LPG). It acts by transphosphatidylation, releasing exclusively cyclic phosphate products as second products. Induces dermonecrosis, hemolysis, increased vascular permeability, edema, inflammatory response, and platelet aggregation. This Sicarius patagonicus (Six-eyed sand spider) protein is Dermonecrotic toxin SpaSicTox-betaIF1.